The chain runs to 361 residues: MKQTPLNARHRALGARMVEFGGWDMPVQYAGIIAEHKATREGAGLFDISHMARFWVTGPDSERFIQLIDTFDISKTAIGQSDYGIMCYEDGGIVDDIFTYHLGPDEWMVVANAGNAEKDWAWLNQHTAGYDVVLTDRSQELAMIALQGPKAESLLAPLTDADVVNLAFHGITKATVEGAAGYISRTGYTGEDGFELFLPAGEIERIWDRLLEVGATPIGLGARDSLRFEPGLALYGHEIERDINPYEAKLGWVVKLDKGPFIGSEALHDIKANGPVRTLVGLEMTGRGIARQGYPVVALDGSELGVVTTGMPSPSLGKNLAYALVKAGSLKIGAEVDVLIREKPVRATVVKTPFYKARYKK.

It belongs to the GcvT family. As to quaternary structure, the glycine cleavage system is composed of four proteins: P, T, L and H.

The catalysed reaction is N(6)-[(R)-S(8)-aminomethyldihydrolipoyl]-L-lysyl-[protein] + (6S)-5,6,7,8-tetrahydrofolate = N(6)-[(R)-dihydrolipoyl]-L-lysyl-[protein] + (6R)-5,10-methylene-5,6,7,8-tetrahydrofolate + NH4(+). The glycine cleavage system catalyzes the degradation of glycine. This is Aminomethyltransferase from Herpetosiphon aurantiacus (strain ATCC 23779 / DSM 785 / 114-95).